A 142-amino-acid polypeptide reads, in one-letter code: Endoribonuclease YbeY (142 aa).

Residues His-107, His-111, and Asp-117 each coordinate Zn(2+).

This sequence belongs to the endoribonuclease YbeY family. It depends on Zn(2+) as a cofactor.

It is found in the cytoplasm. Its function is as follows. Single strand-specific metallo-endoribonuclease involved in late-stage 70S ribosome quality control and in maturation of the 3' terminus of the 16S rRNA. The chain is Endoribonuclease YbeY from Chlorobium phaeobacteroides (strain DSM 266 / SMG 266 / 2430).